Consider the following 1051-residue polypeptide: Ubiquitin carboxyl-terminal hydrolase 28 (1051 aa).

A disordered region spans residues 60–82 (DQRVKEPSHDTTAAEPSEVEESA). Ser67 is subject to Phosphoserine. One can recognise a UIM domain in the interval 97–116 (DNKDDLQAAIALSLLESPNI). Residue Lys99 forms a Glycyl lysine isopeptide (Lys-Gly) (interchain with G-Cter in SUMO2) linkage. The span at 121–135 (RDLNRAHEANSAETK) shows a compositional bias: basic and acidic residues. The disordered stretch occupies residues 121-140 (RDLNRAHEANSAETKRSKRK). A USP domain is found at 162 to 655 (VGLKNVGNTC…SAYCLMYIND (494 aa)). Cys171 functions as the Nucleophile in the catalytic mechanism. Residue Ser376 is modified to Phosphoserine. The interval 483–538 (DLTPKESSSPESCSQNAGSTFSSPEDALPSSEGMNGPFTSPHSSLETPAPPAPRTV) is disordered. 2 stretches are compositionally biased toward polar residues: residues 487 to 505 (KESSSPESCSQNAGSTFSS) and 519 to 528 (PFTSPHSSLE). Ser555 is modified (phosphoserine). His605 acts as the Proton acceptor in catalysis. Residues 703–735 (EEQSCKIPQMESSPNSSSQDFSTSQESPAVSSH) form a disordered region. Positions 713–730 (ESSPNSSSQDFSTSQESP) are enriched in low complexity. At Ser720 the chain carries Phosphoserine. A Phosphothreonine modification is found at Thr1022.

The protein belongs to the peptidase C19 family. USP28 subfamily. Interacts with ZNF304. Interacts with PRKD1. Interacts with TP53BP1. Interacts with FBXW7; following DNA damage, dissociates from FBXW7 leading to degradation of MYC. Post-translationally, degraded upon nickel ion level or hypoxia exposure. Phosphorylated upon DNA damage at Ser-67 and Ser-720, by ATM or ATR. Phosphorylated by PRKD1.

The protein localises to the nucleus. It is found in the nucleoplasm. It catalyses the reaction Thiol-dependent hydrolysis of ester, thioester, amide, peptide and isopeptide bonds formed by the C-terminal Gly of ubiquitin (a 76-residue protein attached to proteins as an intracellular targeting signal).. Deubiquitinase involved in DNA damage response checkpoint and MYC proto-oncogene stability. Involved in DNA damage induced apoptosis by specifically deubiquitinating proteins of the DNA damage pathway such as CLSPN. Also involved in G2 DNA damage checkpoint, by deubiquitinating CLSPN, and preventing its degradation by the anaphase promoting complex/cyclosome (APC/C). In contrast, it does not deubiquitinate PLK1. Specifically deubiquitinates MYC in the nucleoplasm, leading to prevent MYC degradation by the proteasome: acts by specifically interacting with FBXW7 (FBW7alpha) in the nucleoplasm and counteracting ubiquitination of MYC by the SCF(FBXW7) complex. Deubiquitinates ZNF304, hence preventing ZNF304 degradation by the proteasome and leading to the activated KRAS-mediated promoter hypermethylation and transcriptional silencing of tumor suppressor genes (TSGs) in a subset of colorectal cancers (CRC) cells. In Mus musculus (Mouse), this protein is Ubiquitin carboxyl-terminal hydrolase 28 (Usp28).